The chain runs to 137 residues: Small ribosomal subunit protein uS9 (137 aa).

It belongs to the universal ribosomal protein uS9 family.

This Sulfurisphaera tokodaii (strain DSM 16993 / JCM 10545 / NBRC 100140 / 7) (Sulfolobus tokodaii) protein is Small ribosomal subunit protein uS9 (rps9).